We begin with the raw amino-acid sequence, 155 residues long: Nucleoside diphosphate kinase, cytosolic (155 aa).

Residues Lys-16, Phe-64, Arg-92, Thr-98, Arg-109, and Asn-119 each contribute to the ATP site. The active-site Pros-phosphohistidine intermediate is His-122.

It belongs to the NDK family. In terms of assembly, homohexamer. Mg(2+) serves as cofactor.

It is found in the cytoplasm. It catalyses the reaction a 2'-deoxyribonucleoside 5'-diphosphate + ATP = a 2'-deoxyribonucleoside 5'-triphosphate + ADP. The enzyme catalyses a ribonucleoside 5'-diphosphate + ATP = a ribonucleoside 5'-triphosphate + ADP. In terms of biological role, major role in the synthesis of nucleoside triphosphates other than ATP. This Dictyostelium discoideum (Social amoeba) protein is Nucleoside diphosphate kinase, cytosolic (ndkC-1).